A 317-amino-acid chain; its full sequence is Trem-like transcript 1 protein (317 aa).

The N-terminal stretch at Met-1–Ala-20 is a signal peptide. The 102-residue stretch at Asp-21–Leu-122 folds into the Ig-like V-type domain. Residues Asp-21 to Pro-175 are Extracellular-facing. Disulfide bonds link Cys-39/Cys-105 and Cys-53/Cys-60. The segment at Thr-147–Glu-166 is disordered. Residues Leu-176–Val-196 traverse the membrane as a helical segment. At Met-197–Lys-317 the chain is on the cytoplasmic side. Residue Cys-208 is the site of S-palmitoyl cysteine attachment. The interval Gln-212–Leu-278 is disordered. The segment covering Ser-261 to Pro-275 has biased composition (pro residues). Ser-283 is modified (phosphoserine). Positions Val-284–Val-289 match the ITIM motif. A disordered region spans residues Asp-295–Lys-317. The segment covering Pro-308 to Lys-317 has biased composition (polar residues).

When phosphorylated, interacts with PTPN11. When phosphorylated, interacts with PTPN6. Post-translationally, phosphorylated on tyrosine residues. Highly expressed in bone marrow leukocytes, splenic megakaryocytes and platelets. Detected in brain, liver and in peritoneal monocytes.

It is found in the cell membrane. The protein localises to the cytoplasm. In terms of biological role, cell surface receptor that may play a role in the innate and adaptive immune response. This chain is Trem-like transcript 1 protein (Treml1), found in Mus musculus (Mouse).